Here is a 393-residue protein sequence, read N- to C-terminus: Phosphoglycerate kinase (393 aa).

Residues 21–23, 59–62, R118, and R151 each bind substrate; these read DFN and HLGR. ATP is bound by residues K201, E323, and 349 to 352; that span reads GGDT.

This sequence belongs to the phosphoglycerate kinase family. Monomer.

It is found in the cytoplasm. The enzyme catalyses (2R)-3-phosphoglycerate + ATP = (2R)-3-phospho-glyceroyl phosphate + ADP. It functions in the pathway carbohydrate degradation; glycolysis; pyruvate from D-glyceraldehyde 3-phosphate: step 2/5. The polypeptide is Phosphoglycerate kinase (Pelotomaculum thermopropionicum (strain DSM 13744 / JCM 10971 / SI)).